Reading from the N-terminus, the 86-residue chain is Beta-toxin CsEI (86 aa).

Residues 1 to 19 form the signal peptide; the sequence is MNSLLMITACLVLIGTVWA. The region spanning 20–84 is the LCN-type CS-alpha/beta domain; sequence KDGYLVEKTG…TWPLPNKTCG (65 aa). 4 disulfide bridges follow: Cys30-Cys83, Cys34-Cys59, Cys43-Cys64, and Cys47-Cys66. Cys83 carries the post-translational modification Cysteine amide.

Belongs to the long (4 C-C) scorpion toxin superfamily. Sodium channel inhibitor family. Beta subfamily. As to expression, expressed by the venom gland.

Its subcellular location is the secreted. Beta toxins bind voltage-independently at site-4 of sodium channels (Nav) and shift the voltage of activation toward more negative potentials thereby affecting sodium channel activation and promoting spontaneous and repetitive firing. Affects channels from chicken and frog. In Centruroides sculpturatus (Arizona bark scorpion), this protein is Beta-toxin CsEI.